An 843-amino-acid chain; its full sequence is Protein P (843 aa).

The segment at M1–Q177 is terminal protein domain (TP). The tract at residues E178–L346 is spacer. 2 disordered regions span residues Q220–S273 and L289–S316. A compositionally biased stretch (polar residues) spans L289–G299. The polymerase/reverse transcriptase domain (RT) stretch occupies residues E347–Q690. Residues E357 to I600 enclose the Reverse transcriptase domain. D429, D551, and D552 together coordinate Mg(2+).

Belongs to the hepadnaviridae P protein family.

It catalyses the reaction DNA(n) + a 2'-deoxyribonucleoside 5'-triphosphate = DNA(n+1) + diphosphate. The enzyme catalyses Endonucleolytic cleavage to 5'-phosphomonoester.. Activated by host HSP70 and HSP40 in vitro to be able to bind the epsilon loop of the pgRNA. Because deletion of the RNase H region renders the protein partly chaperone-independent, the chaperones may be needed indirectly to relieve occlusion of the RNA-binding site by this domain. Inhibited by several reverse-transcriptase inhibitors: Lamivudine, Adefovir and Entecavir. In terms of biological role, multifunctional enzyme that converts the viral RNA genome into dsDNA in viral cytoplasmic capsids. This enzyme displays a DNA polymerase activity that can copy either DNA or RNA templates, and a ribonuclease H (RNase H) activity that cleaves the RNA strand of RNA-DNA heteroduplexes in a partially processive 3'- to 5'-endonucleasic mode. Neo-synthesized pregenomic RNA (pgRNA) are encapsidated together with the P protein, and reverse-transcribed inside the nucleocapsid. Initiation of reverse-transcription occurs first by binding the epsilon loop on the pgRNA genome, and is initiated by protein priming, thereby the 5'-end of (-)DNA is covalently linked to P protein. Partial (+)DNA is synthesized from the (-)DNA template and generates the relaxed circular DNA (RC-DNA) genome. After budding and infection, the RC-DNA migrates in the nucleus, and is converted into a plasmid-like covalently closed circular DNA (cccDNA). The activity of P protein does not seem to be necessary for cccDNA generation, and is presumably released from (+)DNA by host nuclear DNA repair machinery. This is Protein P from Hepatitis B virus genotype C subtype ad (isolate Japan/S-179/1988) (HBV-C).